The chain runs to 33 residues: GLWSTIKQKGKEAAIAAAKAAGQAVLNSASEAL.

L33 carries the post-translational modification Leucine amide.

Expressed by the skin glands.

Its subcellular location is the secreted. Functionally, has antimicrobial activity. This chain is Dermaseptin-H8, found in Pithecopus hypochondrialis (Orange-legged leaf frog).